The chain runs to 117 residues: Anti-sigma F factor antagonist (117 aa).

One can recognise an STAS domain in the interval 2-115; that stretch reads HFQLEMVTRE…QAIDRVRGIV (114 aa). Ser-58 carries the phosphoserine modification.

It belongs to the anti-sigma-factor antagonist family. Phosphorylated by SpoIIAB on a serine residue.

Its function is as follows. In the phosphorylated form it could act as an anti-anti-sigma factor that counteracts SpoIIAB and thus releases sigma f from inhibition. The polypeptide is Anti-sigma F factor antagonist (spoIIAA) (Lysinibacillus sphaericus (Bacillus sphaericus)).